We begin with the raw amino-acid sequence, 453 residues long: Pup--protein ligase (453 aa).

A Mg(2+)-binding site is contributed by glutamate 9. Position 53 (arginine 53) interacts with ATP. Position 55 (tyrosine 55) interacts with Mg(2+). Aspartate 57 functions as the Proton acceptor in the catalytic mechanism. Mg(2+) is bound at residue glutamate 63. ATP contacts are provided by threonine 66 and tryptophan 420.

The protein belongs to the Pup ligase/Pup deamidase family. Pup-conjugating enzyme subfamily.

It carries out the reaction ATP + [prokaryotic ubiquitin-like protein]-L-glutamate + [protein]-L-lysine = ADP + phosphate + N(6)-([prokaryotic ubiquitin-like protein]-gamma-L-glutamyl)-[protein]-L-lysine.. It participates in protein degradation; proteasomal Pup-dependent pathway. Its pathway is protein modification; protein pupylation. Catalyzes the covalent attachment of the prokaryotic ubiquitin-like protein modifier Pup to the proteasomal substrate proteins, thereby targeting them for proteasomal degradation. This tagging system is termed pupylation. The ligation reaction involves the side-chain carboxylate of the C-terminal glutamate of Pup and the side-chain amino group of a substrate lysine. The polypeptide is Pup--protein ligase (Streptomyces avermitilis (strain ATCC 31267 / DSM 46492 / JCM 5070 / NBRC 14893 / NCIMB 12804 / NRRL 8165 / MA-4680)).